Consider the following 396-residue polypeptide: Adenosine 3'-phospho 5'-phosphosulfate transporter 2 (396 aa).

Positions 22-42 (NGGESAGNSPPSQRKSSTSES) are disordered. The span at 27 to 42 (AGNSPPSQRKSSTSES) shows a compositional bias: polar residues. Phosphoserine is present on residues Ser37 and Ser40. An N-linked (GlcNAc...) asparagine glycan is attached at Asn57. Helical transmembrane passes span 66 to 86 (CAGV…IFTV), 91 to 111 (PYGW…GLVE), 140 to 160 (LILA…LGYL), 163 to 183 (PTQV…SILI), 189 to 209 (GLLD…FTLA), 216 to 236 (NFNL…AAIG), 253 to 273 (VVFY…LVTG), 290 to 310 (FGYG…VLAL), 318 to 338 (IAAT…FVLF), and 342 to 362 (FTLQ…LNVY).

Belongs to the nucleotide-sugar transporter family. SLC35B subfamily.

The protein localises to the golgi apparatus membrane. Mediates the transport of adenosine 3'-phospho 5'-phosphosulfate (PAPS), from cytosol into Golgi. PAPS is a universal sulfuryl donor for sulfation events that take place in the Golgi. Essential for viability. Involved in glycosaminoglycan synthesis and the subsequent signaling. May be involved in hh and dpp signaling by controlling the sulfation of heparan sulfate (HS). This Drosophila melanogaster (Fruit fly) protein is Adenosine 3'-phospho 5'-phosphosulfate transporter 2 (Papst2).